The following is a 179-amino-acid chain: Inner membrane-spanning protein YciB (179 aa).

5 helical membrane passes run 22–42, 50–70, 76–96, 121–141, and 149–169; these read IYAA…YSWV, MALI…FFHN, WKVT…QWVM, LAWA…AFWL, and FKVF…GIYI.

Belongs to the YciB family.

It localises to the cell inner membrane. Plays a role in cell envelope biogenesis, maintenance of cell envelope integrity and membrane homeostasis. The polypeptide is Inner membrane-spanning protein YciB (Escherichia coli O127:H6 (strain E2348/69 / EPEC)).